Consider the following 418-residue polypeptide: Actin-related protein 3 (418 aa).

The protein belongs to the actin family. ARP3 subfamily. Component of the Arp2/3 complex.

The protein resides in the cytoplasm. Its subcellular location is the cytoskeleton. Functions as ATP-binding component of the Arp2/3 complex which is involved in regulation of actin polymerization and together with an activating nucleation-promoting factor (NPF) mediates the formation of branched actin networks. Seems to contact the pointed end of the daughter actin filament. Required during embryogenesis for the developmental migration of tail hemocytes anteriorly, along the ventral midline. This chain is Actin-related protein 3, found in Drosophila melanogaster (Fruit fly).